The sequence spans 443 residues: POU domain, class 3, transcription factor 3-B (443 aa).

Disordered stretches follow at residues 21 to 40 (IVHSDSGGGMQQGSAAVTSV), 100 to 150 (SPWS…AGAW), and 182 to 244 (NGML…PTSD). The span at 101 to 121 (PWSSSPVGMTGSPQQQDVKNN) shows a compositional bias: polar residues. The segment covering 210–225 (SHHHHHHHQHQHHQQA) has biased composition (basic residues). The POU-specific domain occupies 238-312 (EDTPTSDDLE…LLNKWLEEAD (75 aa)). Phosphoserine is present on S317. Positions 330–389 (KRKKRTSIEVSVKGALESHFLKCPKPSAQEITSLADNLQLEKEVVRVWFCNRRQKEKRMT) form a DNA-binding region, homeobox.

It belongs to the POU transcription factor family. Class-3 subfamily. Predominantly expressed in the central nervous system.

The protein resides in the nucleus. In terms of biological role, transcription factor that may play important roles in patterning the embryonic brain. This Danio rerio (Zebrafish) protein is POU domain, class 3, transcription factor 3-B (pou3f3b).